The following is a 556-amino-acid chain: Formate--tetrahydrofolate ligase (556 aa).

65–72 (TPAGEGKT) contacts ATP.

It belongs to the formate--tetrahydrofolate ligase family.

It catalyses the reaction (6S)-5,6,7,8-tetrahydrofolate + formate + ATP = (6R)-10-formyltetrahydrofolate + ADP + phosphate. It functions in the pathway one-carbon metabolism; tetrahydrofolate interconversion. The polypeptide is Formate--tetrahydrofolate ligase (Heliobacterium modesticaldum (strain ATCC 51547 / Ice1)).